Consider the following 412-residue polypeptide: Glucose/galactose transporter (412 aa).

The next 11 membrane-spanning stretches (helical) occupy residues 21-41, 62-82, 90-110, 113-133, 158-178, 192-212, 239-259, 310-330, 331-351, 363-383, and 388-408; these read YGFA…ITCL, LIQF…GQLV, GIVV…PAAS, VYAL…ILQV, FNSL…LSAA, FPYL…AILK, LGAI…SFLV, AFVA…IAMW, SVLA…SLAL, GILC…GALA, and IHLA…YGLI.

This sequence belongs to the major facilitator superfamily. FHS transporter (TC 2.A.1.7) family.

Its subcellular location is the cell inner membrane. In terms of biological role, intake of glucose and galactose. This is Glucose/galactose transporter (gluP) from Brucella abortus (strain 2308).